Reading from the N-terminus, the 439-residue chain is Chromosomal replication initiator protein DnaA (439 aa).

The segment at 1 to 75 (MESWSRCLER…GIREVVLAIG (75 aa)) is domain I, interacts with DnaA modulators. The segment at 75-101 (GSRPKTTELTVPVDTTGRLSQTVPFNG) is domain II. Residues 102–319 (NLDTHYNFDN…GALNTLVARA (218 aa)) form a domain III, AAA+ region region. Residues G147, G149, K150, and T151 each contribute to the ATP site. A domain IV, binds dsDNA region spans residues 320–439 (NFTGRAVTIE…WDKLMRKFSE (120 aa)).

It belongs to the DnaA family. As to quaternary structure, oligomerizes as a right-handed, spiral filament on DNA at oriC.

It is found in the cytoplasm. Plays an essential role in the initiation and regulation of chromosomal replication. ATP-DnaA binds to the origin of replication (oriC) to initiate formation of the DNA replication initiation complex once per cell cycle. Binds the DnaA box (a 9 base pair repeat at the origin) and separates the double-stranded (ds)DNA. Forms a right-handed helical filament on oriC DNA; dsDNA binds to the exterior of the filament while single-stranded (ss)DNA is stabiized in the filament's interior. The ATP-DnaA-oriC complex binds and stabilizes one strand of the AT-rich DNA unwinding element (DUE), permitting loading of DNA polymerase. After initiation quickly degrades to an ADP-DnaA complex that is not apt for DNA replication. Binds acidic phospholipids. The protein is Chromosomal replication initiator protein DnaA of Xylella fastidiosa (strain Temecula1 / ATCC 700964).